Here is a 155-residue protein sequence, read N- to C-terminus: Snaclec bothrojaracin subunit alpha (155 aa).

The N-terminal stretch at 1 to 23 is a signal peptide; it reads MGRFLFVSFGLLVVFLSLSGTAA. Cystine bridges form between C25–C36, C53–C150, and C125–C142. One can recognise a C-type lectin domain in the interval 32–151; the sequence is HEGHCYKFFQ…CGQQNPFVCK (120 aa).

The protein belongs to the snaclec family. In terms of assembly, heterodimer of subunits alpha and beta; disulfide-linked. In terms of tissue distribution, expressed by the venom gland.

Its subcellular location is the secreted. This potent antithrombotic agent acts in a calcium-independent manner. Exerts its anticoagulant effect by two distinct mechanisms. It binds to activated thrombin through exosite 1, blocking fibrinogen clotting, platelet activation, factor V activation and other effects, and it interacts with prothrombin (F2), decreasing its proteolytic activation -especially in the presence of factor Va. In vivo, intravenous injection before thrombosis induction causes a significant decrease in thrombus weight. Furthermore, BJC shows a prolonged effect by remaining in the plasma bound to prothrombin for at least 12 hours. The protein is Snaclec bothrojaracin subunit alpha of Bothrops jararaca (Jararaca).